Here is a 166-residue protein sequence, read N- to C-terminus: MASNKVVFSALLLIIVSVLAATATMADHHKDQVVYSLGERCQPGMGYPMYSLPRCRAVVKRQCVGHGAPGGAVDEQLRQDCCRQLAAVDDSWCRCSALNHMVGGIYRELGATDVGHPMAEVFPGCRRGDLERAAASLPAFCNVDIPNGTGGVCYWLGYPRTPRTGH.

Residues 1–26 form the signal peptide; that stretch reads MASNKVVFSALLLIIVSVLAATATMA. 5 disulfides stabilise this stretch: Cys-41–Cys-93, Cys-55–Cys-81, Cys-63–Cys-125, Cys-82–Cys-141, and Cys-95–Cys-153. An N-linked (GlcNAc...) asparagine glycan is attached at Asn-147.

It belongs to the cereal trypsin/alpha-amylase inhibitor family. Five disulfide bonds are present.

The protein resides in the secreted. In terms of biological role, seed storage protein. This chain is Seed allergenic protein RAG2 (RAG2), found in Oryza sativa subsp. japonica (Rice).